A 118-amino-acid polypeptide reads, in one-letter code: UPF0251 protein TTE1845 (118 aa).

This sequence belongs to the UPF0251 family.

The sequence is that of UPF0251 protein TTE1845 from Caldanaerobacter subterraneus subsp. tengcongensis (strain DSM 15242 / JCM 11007 / NBRC 100824 / MB4) (Thermoanaerobacter tengcongensis).